A 1191-amino-acid polypeptide reads, in one-letter code: uncharacterized protein (1191 aa).

WD repeat units follow at residues 558–588, 599–629, 640–670, 682–712, 723–753, 764–794, 805–835, 995–1025, 1036–1066, 1077–1107, and 1118–1148; these read GHRDGVTSVAISSHKNLIASASRDGTVHLWT, GHTGSIYRVDFSPNGKIFATAGQDQTVKIWD, GHQDSVYSVSFSPDGEILASTSRDRTVRLWH, GHTKSVDDAQFSPDGQTLVSVCRDGQIRLWD, LPEVAFFGVNWHPNGNLLAVAADDGTVRLWT, GHDEFVTRVVFTPDGKQLFSSSSNGSVIHWS, GYPEAIFGLALASNGALLAIGAENNLVKVWD, QRKEPIRSVSLHPTLPQLAAGDEQGNLTLWN, AHGDRLNQLQYSPNGKYLLSAGREGTAKIWS, SDPLPIDQIAISPDSQWIATAASDGMVRLWD, and STSGSLLGLDFNRQGQWLLAVAQNGDLQSWP.

This is an uncharacterized protein from Synechocystis sp. (strain ATCC 27184 / PCC 6803 / Kazusa).